A 1247-amino-acid chain; its full sequence is Nitric oxide synthase (1247 aa).

A disordered region spans residues 13–33; sequence EVAEGRESSKANHIGEERRGY. (6R)-L-erythro-5,6,7,8-tetrahydrobiopterin is bound at residue Ser-146. Position 224 (Cys-224) interacts with heme b. Residues Gln-287, Trp-396, Tyr-397, Glu-401, and Asn-406 each contribute to the L-arginine site. Residues Trp-487 and Phe-500 each coordinate (6R)-L-erythro-5,6,7,8-tetrahydrobiopterin. Residue Tyr-515 participates in heme b binding. The calmodulin-binding stretch occupies residues 537–557; it reads PRRKFNFKQIARAVKFTSKLF. One can recognise a Flavodoxin-like domain in the interval 567–766; the sequence is ATVLYATETG…AFRKWAPEVF (200 aa). 712-743 is a binding site for FMN; the sequence is VFALGSSAYPNFCAFGKYIDNILGELGGERLM. Positions 795–1065 constitute an FAD-binding FR-type domain; the sequence is NTVRYAPVAE…VRSAPSFHMS (271 aa). FAD-binding positions include 855–866 and 998–1008; these read YEPGDHVGIFPA and LQPRFYSISSS. NADP(+)-binding positions include 1073–1091 and 1170–1185; these read ILIG…WQEW and KGHI…AEHV.

Belongs to the NOS family. It depends on heme b as a cofactor. Requires FAD as cofactor. FMN serves as cofactor.

It carries out the reaction 2 L-arginine + 3 NADPH + 4 O2 + H(+) = 2 L-citrulline + 2 nitric oxide + 3 NADP(+) + 4 H2O. Its activity is regulated as follows. Stimulated by calcium/calmodulin. In terms of biological role, produces nitric oxide (NO) which is a messenger molecule with diverse functions throughout the body. Nitric oxide limits plasmodium development in the midgut. This chain is Nitric oxide synthase, found in Anopheles stephensi (Indo-Pakistan malaria mosquito).